The primary structure comprises 156 residues: Small ribosomal subunit protein uS7 (156 aa).

This sequence belongs to the universal ribosomal protein uS7 family. As to quaternary structure, part of the 30S ribosomal subunit. Contacts proteins S9 and S11.

In terms of biological role, one of the primary rRNA binding proteins, it binds directly to 16S rRNA where it nucleates assembly of the head domain of the 30S subunit. Is located at the subunit interface close to the decoding center, probably blocks exit of the E-site tRNA. This Alkaliphilus oremlandii (strain OhILAs) (Clostridium oremlandii (strain OhILAs)) protein is Small ribosomal subunit protein uS7.